The sequence spans 125 residues: MRGTRLALLALVLAACGELAPALRCYVCPEPTGVSDCVTIATCTTNETMCKTTLYSREIVYPFQGDSTVTKSCASKCKPSDVDGIGQTLPVSCCNTELCNVDGAPALNSLHCGALTLLPLLSLRL.

The N-terminal stretch at 1-22 is a signal peptide; the sequence is MRGTRLALLALVLAACGELAPA. In terms of domain architecture, UPAR/Ly6 spans 25-100; it reads CYVCPEPTGV…VSCCNTELCN (76 aa). N46 carries N-linked (GlcNAc...) asparagine glycosylation. Residue G103 is the site of GPI-anchor amidated glycine attachment. Residues 104 to 125 constitute a propeptide, removed in mature form; that stretch reads APALNSLHCGALTLLPLLSLRL.

It localises to the cell membrane. The chain is Ly6/PLAUR domain-containing protein 2 (LYPD2) from Homo sapiens (Human).